The sequence spans 68 residues: DNA-directed RNA polymerase subunit omega (68 aa).

Belongs to the RNA polymerase subunit omega family. As to quaternary structure, the RNAP catalytic core consists of 2 alpha, 1 beta, 1 beta' and 1 omega subunit. When a sigma factor is associated with the core the holoenzyme is formed, which can initiate transcription.

It carries out the reaction RNA(n) + a ribonucleoside 5'-triphosphate = RNA(n+1) + diphosphate. Functionally, promotes RNA polymerase assembly. Latches the N- and C-terminal regions of the beta' subunit thereby facilitating its interaction with the beta and alpha subunits. The polypeptide is DNA-directed RNA polymerase subunit omega (Desulfatibacillum aliphaticivorans).